A 716-amino-acid polypeptide reads, in one-letter code: DNA replication licensing factor MCM7 (716 aa).

The C4-type zinc finger occupies 178–205 (CEDCGHEIYQEVTSRVFMPLFKCPSSRC). The MCM domain maps to 326–531 (IYNKLSRSLA…MDSDLELAKH (206 aa)). Position 376 to 383 (376 to 383 (GDPGVAKS)) interacts with ATP. The Arginine finger signature appears at 508–511 (SRFD).

Belongs to the MCM family. Component of the minichromosome maintenance (MCM) complex, a heterotetramer composed of MCM2, MCM3, MCM4, MCM5, MCM6 and MCM7. Interacts with ETG1. Expressed in shoot apex and flower buds.

Its subcellular location is the nucleus. The protein localises to the cytoplasm. The catalysed reaction is ATP + H2O = ADP + phosphate + H(+). Its function is as follows. Probable component of the MCM2-7 complex (MCM complex) that may function as a DNA helicase and which is essential to undergo a single round of replication initiation and elongation per cell cycle in eukaryotic cells. Required for megagametophyte and embryo development. This is DNA replication licensing factor MCM7 (MCM7) from Arabidopsis thaliana (Mouse-ear cress).